The sequence spans 176 residues: Peptide methionine sulfoxide reductase MsrA (176 aa).

C12 is an active-site residue.

Belongs to the MsrA Met sulfoxide reductase family.

The catalysed reaction is L-methionyl-[protein] + [thioredoxin]-disulfide + H2O = L-methionyl-(S)-S-oxide-[protein] + [thioredoxin]-dithiol. The enzyme catalyses [thioredoxin]-disulfide + L-methionine + H2O = L-methionine (S)-S-oxide + [thioredoxin]-dithiol. Has an important function as a repair enzyme for proteins that have been inactivated by oxidation. Catalyzes the reversible oxidation-reduction of methionine sulfoxide in proteins to methionine. The chain is Peptide methionine sulfoxide reductase MsrA from Thermus thermophilus (strain ATCC BAA-163 / DSM 7039 / HB27).